The sequence spans 365 residues: D-alanine--D-alanine ligase (365 aa).

An ATP-grasp domain is found at lysine 135 to alanine 345. Residue lysine 168 to glutamate 223 coordinates ATP. The Mg(2+) site is built by aspartate 298, glutamate 312, and asparagine 314.

Belongs to the D-alanine--D-alanine ligase family. Mg(2+) serves as cofactor. The cofactor is Mn(2+).

The protein localises to the cytoplasm. It carries out the reaction 2 D-alanine + ATP = D-alanyl-D-alanine + ADP + phosphate + H(+). The protein operates within cell wall biogenesis; peptidoglycan biosynthesis. In terms of biological role, cell wall formation. In Borrelia turicatae (strain 91E135), this protein is D-alanine--D-alanine ligase.